The chain runs to 393 residues: Argininosuccinate synthase (393 aa).

ATP-binding positions include 10-18 and Ala-37; that span reads AYSGGLDTS. Tyr-88 lines the L-citrulline pocket. Gly-118 is an ATP binding site. The L-aspartate site is built by Thr-120, Asn-124, and Asp-125. Asn-124 is an L-citrulline binding site. Positions 128, 176, 185, 261, and 273 each coordinate L-citrulline.

It belongs to the argininosuccinate synthase family. Type 1 subfamily. As to quaternary structure, homotetramer.

It is found in the cytoplasm. It carries out the reaction L-citrulline + L-aspartate + ATP = 2-(N(omega)-L-arginino)succinate + AMP + diphosphate + H(+). It functions in the pathway amino-acid biosynthesis; L-arginine biosynthesis; L-arginine from L-ornithine and carbamoyl phosphate: step 2/3. The chain is Argininosuccinate synthase from Carsonella ruddii (strain PV).